The following is a 1109-amino-acid chain: Myosin ID heavy chain (1109 aa).

The Myosin motor domain occupies 7–687; sequence HGVDDMVMLS…TVFNLEELRE (681 aa). 101 to 108 serves as a coordination point for ATP; it reads GESGAGKT. The interval 564–586 is actin-binding; the sequence is IGALVKALSACTPHYIRCIKPNG. One can recognise a TH1 domain in the interval 725 to 919; it reads KERRRLSIER…VSTPSDGLPA (195 aa). One can recognise an SH3 domain in the interval 958–1017; that stretch reads NVKPSAKALYDFDAESSMELSFKEGDILTVLDQSSGDWWDAELKGRRGKVPSNYLQLIKN. The tract at residues 1017-1109 is disordered; the sequence is NAAPPRAGGP…APRGGMAPRV (93 aa). The span at 1030–1043 shows a compositional bias: low complexity; the sequence is TGNRAPTTTTTSGG.

Belongs to the TRAFAC class myosin-kinesin ATPase superfamily. Myosin family. In terms of assembly, myosin I heavy chain is single-headed. Dimer of a heavy and a light chain. Inability to self-assemble into filaments.

It localises to the cell projection. Its subcellular location is the pseudopodium. The protein localises to the cytoplasm. It is found in the cell cortex. Myosin is a protein that binds to actin and has ATPase activity that is activated by actin. Myosin id may have a role in chemotaxis and aggregation; it could serve to stabilize and even retract cortical structures, such as pseudopods and lamellopods. Involved in the process of phagocytosis. The protein is Myosin ID heavy chain (myoD) of Dictyostelium discoideum (Social amoeba).